We begin with the raw amino-acid sequence, 157 residues long: Cell cycle regulator of non-homologous end joining (157 aa).

The residue at position 1 (M1) is an N-acetylmethionine. The short motif at 1-21 (METLQSETKTRVLPSWLTAQV) is the KBM element. Positions 77–147 (KACEQPALAG…SPEEEEEEDV (71 aa)) are disordered. Low complexity predominate over residues 98–107 (VSPHTSSGSS). Residues 123-136 (SPSQRPGGSSSACS) show a composition bias toward polar residues. The short motif at 147 to 157 (VLKYVREIFFS) is the XLM element.

In terms of assembly, interacts (via KBM motif) with XRCC5/Ku80 and XRCC6/Ku70 heterodimer. Interacts (via XLF motif) with TRIM28/KAP1, ATM, MRE11, NBN and RAD50. Interacts with splicing factor SF3B1. Interacts with ERCC6L2; this interaction is DNA independent. As to quaternary structure, does not interact with XRCC5/Ku80 and XRCC6/Ku70 heterodimer. Interacts (via KBM motif) with XRCC5/Ku80 and XRCC6/Ku70 heterodimer.

It localises to the cytoplasm. The protein resides in the nucleus. Its subcellular location is the chromosome. Functionally, cell-cycle-specific regulator of classical non-homologous end joining (NHEJ) of DNA double-strand break (DSB) repair, which can act both as an activator or inhibitor of NHEJ, depending on the cell cycle phase. Acts as a regulator of DNA repair pathway choice by specifically inhibiting classical NHEJ during the S and G2 phases, thereby promoting error-free repair by homologous recombination during cell cycle phases when sister chromatids are present. Preferentially protects single-stranded overhangs at break sites by inhibiting classical NHEJ, thereby creating a local environment that favors homologous recombination. Acts via interaction with XRCC5/Ku80 and XRCC6/Ku70. In contrast, acts as an activator of NHEJ during G1 phase of the cell cycle: promotes classical NHEJ in G1 phase cells via multivalent interactions that increase the affinity of DNA damage response proteins for DSB-associated chromatin. Also involved in immunoglobulin V(D)J recombination. May also act as an indirect regulator of proteasome. In Homo sapiens (Human), this protein is Cell cycle regulator of non-homologous end joining.